A 338-amino-acid chain; its full sequence is Lipoate-protein ligase A (338 aa).

Positions 29–216 constitute a BPL/LPL catalytic domain; that stretch reads PATQRVLFLW…AFFAHYGERV (188 aa). Residues arginine 71, 76–79, and lysine 134 contribute to the ATP site; that span reads GAVF. Position 134 (lysine 134) interacts with (R)-lipoate.

This sequence belongs to the LplA family. As to quaternary structure, monomer.

The protein localises to the cytoplasm. The catalysed reaction is L-lysyl-[lipoyl-carrier protein] + (R)-lipoate + ATP = N(6)-[(R)-lipoyl]-L-lysyl-[lipoyl-carrier protein] + AMP + diphosphate + H(+). It participates in protein modification; protein lipoylation via exogenous pathway; protein N(6)-(lipoyl)lysine from lipoate: step 1/2. Its pathway is protein modification; protein lipoylation via exogenous pathway; protein N(6)-(lipoyl)lysine from lipoate: step 2/2. In terms of biological role, catalyzes both the ATP-dependent activation of exogenously supplied lipoate to lipoyl-AMP and the transfer of the activated lipoyl onto the lipoyl domains of lipoate-dependent enzymes. The polypeptide is Lipoate-protein ligase A (Escherichia coli O1:K1 / APEC).